A 369-amino-acid chain; its full sequence is Probable trehalose-phosphate phosphatase I (369 aa).

It belongs to the trehalose phosphatase family. Requires a divalent metal cation as cofactor.

The enzyme catalyses alpha,alpha-trehalose 6-phosphate + H2O = alpha,alpha-trehalose + phosphate. Its pathway is glycan biosynthesis; trehalose biosynthesis. In terms of biological role, removes the phosphate from trehalose 6-phosphate to produce free trehalose. Trehalose accumulation in plant may improve abiotic stress tolerance. The polypeptide is Probable trehalose-phosphate phosphatase I (TPPI) (Arabidopsis thaliana (Mouse-ear cress)).